The primary structure comprises 524 residues: Probable cytosol aminopeptidase (524 aa).

Lys-288 and Asp-293 together coordinate Mn(2+). Lys-300 is an active-site residue. Mn(2+) is bound by residues Asp-311, Asp-370, and Glu-372. Arg-374 is an active-site residue.

It belongs to the peptidase M17 family. It depends on Mn(2+) as a cofactor.

The protein localises to the cytoplasm. It carries out the reaction Release of an N-terminal amino acid, Xaa-|-Yaa-, in which Xaa is preferably Leu, but may be other amino acids including Pro although not Arg or Lys, and Yaa may be Pro. Amino acid amides and methyl esters are also readily hydrolyzed, but rates on arylamides are exceedingly low.. The catalysed reaction is Release of an N-terminal amino acid, preferentially leucine, but not glutamic or aspartic acids.. Presumably involved in the processing and regular turnover of intracellular proteins. Catalyzes the removal of unsubstituted N-terminal amino acids from various peptides. The sequence is that of Probable cytosol aminopeptidase (pepA) from Mycobacterium leprae (strain TN).